The sequence spans 215 residues: Thymidylate kinase (215 aa).

Residue 11-18 (GIDGAGKS) participates in ATP binding.

The protein belongs to the thymidylate kinase family.

It catalyses the reaction dTMP + ATP = dTDP + ADP. Phosphorylation of dTMP to form dTDP in both de novo and salvage pathways of dTTP synthesis. This chain is Thymidylate kinase, found in Nitrosomonas eutropha (strain DSM 101675 / C91 / Nm57).